Consider the following 410-residue polypeptide: Lissencephaly-1 homolog (410 aa).

The LisH domain occupies Gln7–Asn39. The stretch at Lys32–Gly82 forms a coiled coil. WD repeat units lie at residues Gly106–Lys147, Gly148–His189, Gly190–Thr229, Gly232–Glu271, Glu274–Thr333, Gly336–Thr375, and Ala378–Arg410.

Belongs to the WD repeat LIS1/nudF family. Can self-associate. Component of the cytosolic PAF-AH (I) heterotetrameric enzyme, which is composed of PAFAH1B1 (beta), PAFAH1B2 (alpha2) and PAFAH1B3 (alpha1) subunits. The catalytic activity of the enzyme resides in the alpha1 (PAFAH1B3) and alpha2 (PAFAH1B2) subunits, whereas the beta subunit (PAFAH1B1) has regulatory activity. Trimer formation is not essential for the catalytic activity. Interacts with dynein, dynactin, nde1 and ndel1.

The protein localises to the cytoplasm. It localises to the cytoskeleton. Its subcellular location is the microtubule organizing center. It is found in the centrosome. In terms of biological role, regulatory subunit (beta subunit) of the cytosolic type I platelet-activating factor (PAF) acetylhydrolase (PAF-AH (I)), an enzyme that catalyzes the hydrolyze of the acetyl group at the sn-2 position of PAF and its analogs and participates in the PAF inactivation. Positively regulates the activity of the minus-end directed microtubule motor protein dynein. May enhance dynein-mediated microtubule sliding by targeting dynein to the microtubule plus end. Required for several dynein- and microtubule-dependent processes such as the maintenance of Golgi integrity, the peripheral transport of microtubule fragments and the coupling of the nucleus and centrosome. May be required for proliferation of neuronal precursors and neuronal migration. The polypeptide is Lissencephaly-1 homolog (pafah1b1) (Tetraodon nigroviridis (Spotted green pufferfish)).